A 385-amino-acid polypeptide reads, in one-letter code: MKDSFLFTSESVTEGHPDKMADQISDAVLDYIIERDQKAKVACETLVSNGFCMITGELKTSVYAPMQEIAREVVKKIGYTDALYGFDYRSAAVLNGVGEQSPDINQGVDREDGEIGAGDQGLMFGYACKETETLMPLPIHLAHQLTFALAQKRKDNTLPFLRPDGKSQVSVRYENNKPVSIDTIVISTQHSPEVSQKHLKEAVIEEIVYKVLPKEYLHDNIKFFVNPTGKFVIGGPQGDAGLTGRKIIVDTYGGSCPHGGGAFSGKDPSKVDRSAAYAARYVAKNLVASGVCDKATVQLAYAIGVIEPVSVYVNTHNTSKYSSAELEKCVKAVFKLTPKGIIESLDLLRPIYSLTSAYGHFGRELEEFTWEKTNKAEEIKAFFKR.

Histidine 16 provides a ligand contact to ATP. Aspartate 18 contributes to the Mg(2+) binding site. Residue glutamate 44 coordinates K(+). Residues glutamate 57 and glutamine 100 each contribute to the L-methionine site. Positions 100-110 (QSPDINQGVDR) are flexible loop. ATP contacts are provided by residues 164–166 (DGK), 230–231 (KF), aspartate 239, 245–246 (RK), alanine 262, and lysine 266. Position 239 (aspartate 239) interacts with L-methionine. Residue lysine 270 participates in L-methionine binding.

It belongs to the AdoMet synthase family. As to quaternary structure, homotetramer; dimer of dimers. It depends on Mg(2+) as a cofactor. The cofactor is K(+).

The protein localises to the cytoplasm. The enzyme catalyses L-methionine + ATP + H2O = S-adenosyl-L-methionine + phosphate + diphosphate. Its pathway is amino-acid biosynthesis; S-adenosyl-L-methionine biosynthesis; S-adenosyl-L-methionine from L-methionine: step 1/1. Functionally, catalyzes the formation of S-adenosylmethionine (AdoMet) from methionine and ATP. The overall synthetic reaction is composed of two sequential steps, AdoMet formation and the subsequent tripolyphosphate hydrolysis which occurs prior to release of AdoMet from the enzyme. The sequence is that of S-adenosylmethionine synthase from Helicobacter pylori (strain G27).